A 126-amino-acid chain; its full sequence is Phosphoribosyl-AMP cyclohydrolase (126 aa).

Aspartate 82 contributes to the Mg(2+) binding site. Residue cysteine 83 participates in Zn(2+) binding. 2 residues coordinate Mg(2+): aspartate 84 and aspartate 86. The Zn(2+) site is built by cysteine 99 and cysteine 106.

It belongs to the PRA-CH family. Homodimer. Requires Mg(2+) as cofactor. It depends on Zn(2+) as a cofactor.

The protein resides in the cytoplasm. The enzyme catalyses 1-(5-phospho-beta-D-ribosyl)-5'-AMP + H2O = 1-(5-phospho-beta-D-ribosyl)-5-[(5-phospho-beta-D-ribosylamino)methylideneamino]imidazole-4-carboxamide. It functions in the pathway amino-acid biosynthesis; L-histidine biosynthesis; L-histidine from 5-phospho-alpha-D-ribose 1-diphosphate: step 3/9. Its function is as follows. Catalyzes the hydrolysis of the adenine ring of phosphoribosyl-AMP. The chain is Phosphoribosyl-AMP cyclohydrolase from Sphingopyxis alaskensis (strain DSM 13593 / LMG 18877 / RB2256) (Sphingomonas alaskensis).